The primary structure comprises 758 residues: Spastin (758 aa).

Residues 1-103 (MVRTKNQSSS…SPRSGHHHSY (103 aa)) are disordered. Topologically, residues 1–121 (MVRTKNQSSS…KQNLYVVSFP (121 aa)) are cytoplasmic. The required for localization to punctate cytoplasmic foci stretch occupies residues 1–210 (MVRTKNQSSS…RPIQPLEMAA (210 aa)). Low complexity-rich tracts occupy residues 8–28 (SSSS…SSGA), 43–58 (RSSS…AGGS), 66–76 (SSNRRSPGSSP), and 85–95 (TDDLTPTTCSP). The helical intramembrane region spans 122-142 (IIFLFNVLRSLIYQLFCIFRY). Topologically, residues 143-758 (LYGASTKVIY…WSQDYGDITI (616 aa)) are cytoplasmic. 2 stretches are compositionally biased toward polar residues: residues 169–180 (SKEQQQSLNHPS) and 189–198 (QEQQLSNQPQ). A disordered region spans residues 169-202 (SKEQQQSLNHPSELNREGDGQEQQLSNQPQRFRP). A sufficient for interaction with microtubules and microtubule severing region spans residues 208 to 758 (MAANRPGGGY…WSQDYGDITI (551 aa)). The MIT domain maps to 233–308 (HRRAFEYISK…SMARDRLHFL (76 aa)). The span at 323–339 (KEKQKEEARSKPQKSRE) shows a compositional bias: basic and acidic residues. The disordered stretch occupies residues 323–454 (KEKQKEEARS…GPSGSGASTP (132 aa)). Polar residues-rich tracts occupy residues 390–406 (NKSQ…TSVG) and 425–454 (QFSS…ASTP). Residues 443–455 (NNGPSGSGASTPV) form a required for interaction with microtubules region. Residue 523–530 (GPPGNGKT) participates in ATP binding.

This sequence belongs to the AAA ATPase family. Spastin subfamily. Homohexamer. The homohexamer is stabilized by ATP-binding. The homohexamer may adopt a ring conformation through which microtubules pass prior to being severed. Interacts with microtubules. Interacts with atl; may be involved in microtubule dynamics.

Its subcellular location is the membrane. It localises to the cytoplasm. The protein localises to the cytoskeleton. It is found in the microtubule organizing center. The protein resides in the centrosome. Its subcellular location is the chromosome. It localises to the lipid droplet. It catalyses the reaction n ATP + n H2O + a microtubule = n ADP + n phosphate + (n+1) alpha/beta tubulin heterodimers.. Its function is as follows. ATP-dependent microtubule severing protein. Stimulates microtubule minus-end depolymerization and poleward microtubule flux in the mitotic spindle. Regulates microtubule stability in the neuromuscular junction synapse. Involved in lipid metabolism by regulating the size and distribution of lipid droplets. Involved in axon regeneration by regulating microtubule severing. This chain is Spastin, found in Drosophila simulans (Fruit fly).